Here is a 191-residue protein sequence, read N- to C-terminus: Acireductone dioxygenase 2 (191 aa).

Positions 102, 104, 108, and 146 each coordinate Fe(2+). The Ni(2+) site is built by histidine 102, histidine 104, glutamate 108, and histidine 146.

The protein belongs to the acireductone dioxygenase (ARD) family. In terms of assembly, monomer. Requires Fe(2+) as cofactor. Ni(2+) serves as cofactor.

The enzyme catalyses 1,2-dihydroxy-5-(methylsulfanyl)pent-1-en-3-one + O2 = 3-(methylsulfanyl)propanoate + CO + formate + 2 H(+). The catalysed reaction is 1,2-dihydroxy-5-(methylsulfanyl)pent-1-en-3-one + O2 = 4-methylsulfanyl-2-oxobutanoate + formate + 2 H(+). The protein operates within amino-acid biosynthesis; L-methionine biosynthesis via salvage pathway; L-methionine from S-methyl-5-thio-alpha-D-ribose 1-phosphate: step 5/6. Its function is as follows. Catalyzes 2 different reactions between oxygen and the acireductone 1,2-dihydroxy-3-keto-5-methylthiopentene (DHK-MTPene) depending upon the metal bound in the active site. Fe-containing acireductone dioxygenase (Fe-ARD) produces formate and 2-keto-4-methylthiobutyrate (KMTB), the alpha-ketoacid precursor of methionine in the methionine recycle pathway. Ni-containing acireductone dioxygenase (Ni-ARD) produces methylthiopropionate, carbon monoxide and formate, and does not lie on the methionine recycle pathway. In Nocardia farcinica (strain IFM 10152), this protein is Acireductone dioxygenase 2.